Reading from the N-terminus, the 170-residue chain is MAAQTQRAVLAGGCFWGMEDLIRRLPGVTATRVGYTGGDVPNATYRNHGTHAEAIEILFDPARTDFRAILEFFFQIHDPSTKNRQGNDIGLSYRSAIYYVDDEQKRIAEDTIADVDASGLWPGKVVTEVEPVGPFWEAEPEHQDYLERYPDGYTCHFPRPGWRLPARAEG.

The active site involves Cys14.

This sequence belongs to the MsrA Met sulfoxide reductase family.

It carries out the reaction L-methionyl-[protein] + [thioredoxin]-disulfide + H2O = L-methionyl-(S)-S-oxide-[protein] + [thioredoxin]-dithiol. The catalysed reaction is [thioredoxin]-disulfide + L-methionine + H2O = L-methionine (S)-S-oxide + [thioredoxin]-dithiol. In terms of biological role, has an important function as a repair enzyme for proteins that have been inactivated by oxidation. Catalyzes the reversible oxidation-reduction of methionine sulfoxide in proteins to methionine. The protein is Peptide methionine sulfoxide reductase MsrA of Streptomyces avermitilis (strain ATCC 31267 / DSM 46492 / JCM 5070 / NBRC 14893 / NCIMB 12804 / NRRL 8165 / MA-4680).